We begin with the raw amino-acid sequence, 332 residues long: Putative pumilio homolog 17 (332 aa).

The PUM-HD domain maps to Met1 to Leu302. One copy of the Pumilio 1 repeat lies at Ser82–Ala117. Residues Ile118 to Asp152 form a Pumilio 2; degenerate repeat. 4 Pumilio repeats span residues His153 to Met188, Asp189 to Asp225, Lys226 to Ala264, and Cys265 to Tyr300.

It is found in the cytoplasm. In terms of biological role, sequence-specific RNA-binding protein that regulates translation and mRNA stability by binding the 3'-UTR of target mRNAs. This Arabidopsis thaliana (Mouse-ear cress) protein is Putative pumilio homolog 17 (APUM17).